A 1454-amino-acid polypeptide reads, in one-letter code: Receptor-type tyrosine-protein phosphatase T (1454 aa).

The N-terminal stretch at 1–29 (MGSLGGLALCLLRLLLLGLQRPPLPGAGA) is a signal peptide. Topologically, residues 30 to 770 (QSAAGGCSFD…EKQVDNTVKM (741 aa)) are extracellular. Positions 34-195 (GGCSFDEHYS…VRVLAHPCRK (162 aa)) constitute an MAM domain. N-linked (GlcNAc...) asparagine glycosylation is found at asparagine 82, asparagine 102, asparagine 141, and asparagine 212. The Ig-like C2-type domain maps to 197-288 (PHFLRLQNVE…SGVSNYAELI (92 aa)). Cysteine 217 and cysteine 271 are disulfide-bonded. Fibronectin type-III domains lie at 295–388 (PIAP…TKCA), 393–487 (GPQN…TEED), and 488–594 (VPGA…SAPS). 6 N-linked (GlcNAc...) asparagine glycosylation sites follow: asparagine 425, asparagine 514, asparagine 551, asparagine 605, asparagine 658, and asparagine 688. Residues 670–767 (AELKPSNLPV…VEPEKQVDNT (98 aa)) form the Fibronectin type-III 4 domain. The helical transmembrane segment at 771 to 791 (AGVIAGLLMFIIILLGVMLTI) threads the bilayer. At 792-1454 (KRRKLAKKQK…EVALEYLSSF (663 aa)) the chain is on the cytoplasmic side. The disordered stretch occupies residues 800 to 852 (QKETQSGAQREMGPVASTDKPTAKLGTNRNDEGFSSSSQDVNGFTDGSRGELS). Polar residues predominate over residues 824 to 841 (LGTNRNDEGFSSSSQDVN). 2 Tyrosine-protein phosphatase domains span residues 902–1156 (FKEE…ILEA) and 1188–1450 (IKDE…ALEY). Substrate contacts are provided by residues aspartate 1065, 1097–1103 (CSAGAGR), and glutamine 1141. Catalysis depends on cysteine 1097, which acts as the Phosphocysteine intermediate. Residue serine 1221 is modified to Phosphoserine. The Phosphocysteine intermediate role is filled by cysteine 1391.

Belongs to the protein-tyrosine phosphatase family. Receptor class 2B subfamily. In terms of tissue distribution, expression is restricted to the CNS. Distributed throughout the brain and spinal cord.

It is found in the membrane. The catalysed reaction is O-phospho-L-tyrosyl-[protein] + H2O = L-tyrosyl-[protein] + phosphate. Functionally, may be involved in both signal transduction and cellular adhesion in the CNS. May have specific signaling roles in the tyrosine phosphorylation/dephosphorylation pathway in the anterior compartment of the adult cerebellar cortex. The chain is Receptor-type tyrosine-protein phosphatase T (Ptprt) from Mus musculus (Mouse).